Consider the following 193-residue polypeptide: MPVADTSQPMSGQPVSAVAERYASSLFELAREAGSVDAVAGDLNRFQAMIDESVDLQRLVTSPAFTSEQQASAIAALCDKAEIGGLVGNFLKLVAANRRLFAVPGMIAAFRMIAARHRGELAADVTSAHALTPAQETELKEALKSATGKTVTMFVTVDPSLLGGLIVKIGSRQIDTSLRTKLSTLKLALKEVG.

This sequence belongs to the ATPase delta chain family. In terms of assembly, F-type ATPases have 2 components, F(1) - the catalytic core - and F(0) - the membrane proton channel. F(1) has five subunits: alpha(3), beta(3), gamma(1), delta(1), epsilon(1). F(0) has three main subunits: a(1), b(2) and c(10-14). The alpha and beta chains form an alternating ring which encloses part of the gamma chain. F(1) is attached to F(0) by a central stalk formed by the gamma and epsilon chains, while a peripheral stalk is formed by the delta and b chains.

Its subcellular location is the cell inner membrane. Its function is as follows. F(1)F(0) ATP synthase produces ATP from ADP in the presence of a proton or sodium gradient. F-type ATPases consist of two structural domains, F(1) containing the extramembraneous catalytic core and F(0) containing the membrane proton channel, linked together by a central stalk and a peripheral stalk. During catalysis, ATP synthesis in the catalytic domain of F(1) is coupled via a rotary mechanism of the central stalk subunits to proton translocation. This protein is part of the stalk that links CF(0) to CF(1). It either transmits conformational changes from CF(0) to CF(1) or is implicated in proton conduction. The polypeptide is ATP synthase subunit delta (Allorhizobium ampelinum (strain ATCC BAA-846 / DSM 112012 / S4) (Agrobacterium vitis (strain S4))).